The chain runs to 311 residues: Methionyl-tRNA formyltransferase (311 aa).

111 to 114 (SLLP) serves as a coordination point for (6S)-5,6,7,8-tetrahydrofolate.

Belongs to the Fmt family.

It carries out the reaction L-methionyl-tRNA(fMet) + (6R)-10-formyltetrahydrofolate = N-formyl-L-methionyl-tRNA(fMet) + (6S)-5,6,7,8-tetrahydrofolate + H(+). Its function is as follows. Attaches a formyl group to the free amino group of methionyl-tRNA(fMet). The formyl group appears to play a dual role in the initiator identity of N-formylmethionyl-tRNA by promoting its recognition by IF2 and preventing the misappropriation of this tRNA by the elongation apparatus. In Caldicellulosiruptor saccharolyticus (strain ATCC 43494 / DSM 8903 / Tp8T 6331), this protein is Methionyl-tRNA formyltransferase.